The sequence spans 126 residues: Large ribosomal subunit protein uL14m (126 aa).

The protein belongs to the universal ribosomal protein uL14 family. Component of the mitochondrial large ribosomal subunit (mt-LSU). Mature yeast 74S mitochondrial ribosomes consist of a small (37S) and a large (54S) subunit. The 37S small subunit contains a 15S ribosomal RNA (15S mt-rRNA) and at least 32 different proteins. The 54S large subunit contains a 21S rRNA (21S mt-rRNA) and at least 45 different proteins.

Its subcellular location is the mitochondrion. Functionally, component of the mitochondrial ribosome (mitoribosome), a dedicated translation machinery responsible for the synthesis of mitochondrial genome-encoded proteins, including at least some of the essential transmembrane subunits of the mitochondrial respiratory chain. The mitoribosomes are attached to the mitochondrial inner membrane and translation products are cotranslationally integrated into the membrane. This chain is Large ribosomal subunit protein uL14m (mrpl38), found in Schizosaccharomyces pombe (strain 972 / ATCC 24843) (Fission yeast).